The sequence spans 776 residues: Serine/threonine-protein kinase-like protein CCR2 (776 aa).

Positions 1–22 are cleaved as a signal peptide; that stretch reads MQPNSHIFVIITISSLIITVSA. Residues 23–432 are Extracellular-facing; the sequence is YGSTGTIAAA…QKEQREVRRL (410 aa). N-linked (GlcNAc...) asparagine glycosylation is found at asparagine 59, asparagine 92, asparagine 154, asparagine 162, asparagine 205, asparagine 278, asparagine 287, and asparagine 350. The TNFR-Cys repeat unit spans residues 341-396; sequence NCGDGWFAFNASILKESELTSLCSFHNLNICLRCGISCLEGYFPSSTCNPNADRVC. Cystine bridges form between cysteine 342–cysteine 371, cysteine 374–cysteine 388, and cysteine 378–cysteine 396. Residue asparagine 404 is glycosylated (N-linked (GlcNAc...) asparagine). A helical transmembrane segment spans residues 433 to 453; it reads VIIIGCSVLGFLVMLIGLSFI. Topologically, residues 454–776 are cytoplasmic; it reads PKMTKGSKRD…DLIVKSGLTF (323 aa). One can recognise a Protein kinase domain in the interval 519–776; that stretch reads FKEFNELGRG…DLIVKSGLTF (258 aa). Residues 525 to 533 and lysine 547 contribute to the ATP site; that span reads LGRGSFGFV. Catalysis depends on aspartate 644, which acts as the Proton acceptor.

It belongs to the protein kinase superfamily. Ser/Thr protein kinase family. As to quaternary structure, homodimer. Expressed in roots, leaves, shoot apical meristems (SAM), and floral buds.

It localises to the membrane. It carries out the reaction L-seryl-[protein] + ATP = O-phospho-L-seryl-[protein] + ADP + H(+). It catalyses the reaction L-threonyl-[protein] + ATP = O-phospho-L-threonyl-[protein] + ADP + H(+). Functionally, serine/threonine-protein kinase with low activity. The chain is Serine/threonine-protein kinase-like protein CCR2 (CCR2) from Arabidopsis thaliana (Mouse-ear cress).